Consider the following 288-residue polypeptide: uncharacterized protein (288 aa).

Positions 1–27 (MKFEFRTLVLISLAVVVVLSGCSQSPS) are cleaved as a signal peptide. The segment at 144–167 (GESGEAGGAGEQLPASDQASGEEP) is disordered.

This is an uncharacterized protein from Archaeoglobus fulgidus (strain ATCC 49558 / DSM 4304 / JCM 9628 / NBRC 100126 / VC-16).